A 110-amino-acid chain; its full sequence is MIVTTSPNIEGKQIIEYKKIVFGEVITGVNFMKDIGAGLRNFFGGRSQGYEDELINAREEAIREMESRAKDIGANAVIGVDIDYEVLGADNGMLMVTASGTAVVIEVQDY.

The protein belongs to the UPF0145 family.

In Listeria welshimeri, this protein is UPF0145 protein.